Consider the following 234-residue polypeptide: Peptidase E (234 aa).

Active-site charge relay system residues include S123, D138, and H160.

This sequence belongs to the peptidase S51 family.

Its subcellular location is the cytoplasm. It carries out the reaction Dipeptidase E catalyzes the hydrolysis of dipeptides Asp-|-Xaa. It does not act on peptides with N-terminal Glu, Asn or Gln, nor does it cleave isoaspartyl peptides.. Hydrolyzes dipeptides containing N-terminal aspartate residues. May play a role in allowing the cell to use peptide aspartate to spare carbon otherwise required for the synthesis of the aspartate family of amino acids. This chain is Peptidase E, found in Actinobacillus pleuropneumoniae serotype 5b (strain L20).